The sequence spans 242 residues: UPF0309 protein BAbS19_II03080 (242 aa).

An SIS domain is found at A30 to P214.

It belongs to the UPF0309 family.

This Brucella abortus (strain S19) protein is UPF0309 protein BAbS19_II03080.